The primary structure comprises 83 residues: NAD(P)H-quinone oxidoreductase subunit L (83 aa).

Transmembrane regions (helical) follow at residues 15-35 (LFVL…VPLA) and 53-73 (LGVY…APFI).

It belongs to the complex I NdhL subunit family. As to quaternary structure, NDH-1 can be composed of about 15 different subunits; different subcomplexes with different compositions have been identified which probably have different functions.

It is found in the cellular thylakoid membrane. The catalysed reaction is a plastoquinone + NADH + (n+1) H(+)(in) = a plastoquinol + NAD(+) + n H(+)(out). It catalyses the reaction a plastoquinone + NADPH + (n+1) H(+)(in) = a plastoquinol + NADP(+) + n H(+)(out). Its function is as follows. NDH-1 shuttles electrons from an unknown electron donor, via FMN and iron-sulfur (Fe-S) centers, to quinones in the respiratory and/or the photosynthetic chain. The immediate electron acceptor for the enzyme in this species is believed to be plastoquinone. Couples the redox reaction to proton translocation, and thus conserves the redox energy in a proton gradient. Cyanobacterial NDH-1 also plays a role in inorganic carbon-concentration. The sequence is that of NAD(P)H-quinone oxidoreductase subunit L from Synechococcus sp. (strain CC9902).